Consider the following 455-residue polypeptide: Serine--tRNA ligase (455 aa).

An L-serine-binding site is contributed by 252–254 (TAE). Residues 283–285 (RKE) and V299 contribute to the ATP site. E306 contributes to the L-serine binding site. Residue 370–373 (EVVS) coordinates ATP. T406 contacts L-serine.

The protein belongs to the class-II aminoacyl-tRNA synthetase family. Type-1 seryl-tRNA synthetase subfamily. In terms of assembly, homodimer. The tRNA molecule binds across the dimer.

It localises to the cytoplasm. It carries out the reaction tRNA(Ser) + L-serine + ATP = L-seryl-tRNA(Ser) + AMP + diphosphate + H(+). It catalyses the reaction tRNA(Sec) + L-serine + ATP = L-seryl-tRNA(Sec) + AMP + diphosphate + H(+). Its pathway is aminoacyl-tRNA biosynthesis; selenocysteinyl-tRNA(Sec) biosynthesis; L-seryl-tRNA(Sec) from L-serine and tRNA(Sec): step 1/1. In terms of biological role, catalyzes the attachment of serine to tRNA(Ser). Is also able to aminoacylate tRNA(Sec) with serine, to form the misacylated tRNA L-seryl-tRNA(Sec), which will be further converted into selenocysteinyl-tRNA(Sec). The protein is Serine--tRNA ligase of Pyrococcus furiosus (strain ATCC 43587 / DSM 3638 / JCM 8422 / Vc1).